We begin with the raw amino-acid sequence, 245 residues long: Protein DEHYDRATION-INDUCED 19 homolog 4 (245 aa).

The protein belongs to the Di19 family.

This chain is Protein DEHYDRATION-INDUCED 19 homolog 4 (DI19-4), found in Oryza sativa subsp. japonica (Rice).